A 58-amino-acid polypeptide reads, in one-letter code: Cyclotide trypsin inhibitor TopI1 (58 aa).

Positions 1 to 23 are cleaved as a signal peptide; it reads MKFIIVLLLLTALTLTSIPVIEG. Residues 24-55 constitute a cross-link (cyclopeptide (Ile-Lys)); sequence ILKRCKTYDDCKDVCKARKGKCEFGICKCMIK. Cystine bridges form between Cys-28–Cys-45, Cys-34–Cys-50, and Cys-38–Cys-52. Ser-56 is subject to Serine amide.

In terms of processing, this is a cyclic peptide. Expressed by the venom gland.

Its subcellular location is the secreted. Functionally, first cyclic scorpion trypsin inhibitor (Kd~0.5 nM). Does not inhibit chymotrypsin. The protein is Cyclotide trypsin inhibitor TopI1 of Tityus obscurus (Amazonian scorpion).